An 829-amino-acid polypeptide reads, in one-letter code: ATP-dependent RNA helicase drs1 (829 aa).

2 disordered regions span residues M1–E96 and R145–F295. Positions D20 to E32 are enriched in acidic residues. A compositionally biased stretch (basic residues) spans K48–K59. Acidic residues predominate over residues T63–A78. The segment covering A150 to E163 has biased composition (basic and acidic residues). Composition is skewed to acidic residues over residues D164 to L190, D218 to D228, D235 to S246, and Q258 to E271. Residues A272–E291 show a composition bias toward basic and acidic residues. The short motif at S293–A321 is the Q motif element. The region spanning I324–I498 is the Helicase ATP-binding domain. A337–T344 contributes to the ATP binding site. The DEAD box motif lies at D446 to D449. The 180-residue stretch at Y528–Q707 folds into the Helicase C-terminal domain. A disordered region spans residues T728–K829. Positions G749–G791 are enriched in basic and acidic residues. Basic residues predominate over residues K800–G815.

Belongs to the DEAD box helicase family. DDX27/DRS1 subfamily. As to quaternary structure, associates with pre-ribosomal particles.

The protein localises to the nucleus. It is found in the nucleolus. The catalysed reaction is ATP + H2O = ADP + phosphate + H(+). Its function is as follows. ATP-binding RNA helicase involved in ribosome assembly. The polypeptide is ATP-dependent RNA helicase drs1 (drh-11) (Neurospora crassa (strain ATCC 24698 / 74-OR23-1A / CBS 708.71 / DSM 1257 / FGSC 987)).